Reading from the N-terminus, the 783-residue chain is MNTKILDQLEFNKVKDQFTEYLQTEQAQAELRDLVPMTNPERIQNQFTEIQEMSEIFIEHHGFAIGSLRDISEPLRRLELDADLNIQELIAIKKVLQASADLSRFYADLENVELIALKRLFEKIEAFPSLQGSLQSINDGGFIEHFASPELQNIRRQLKACDDAIRQTLQDILKKSGHMLAENLIASRNGRSVLPVKNTYRNRIAGVVHDISSSGNTVYIEPRAVIQLNEKITQLRADERHEMARILHELSDQLRPHTAAIANNAWILGHMDFIRGKYLYLHDKKAIIPEISDNQTLQLLNVRHPLLINPVANDLRFDEDLTVIVITGPNTGGKTVMLKTLGLAQLMAQSGLPILADKGSRVAIFQEIFADIGDEQSIEQSLSTFSSHMTHIVEILNTADSNSLVLVDELGAGTDPQEGASLAMAILEHLRLSQIKTMATTHYPELKAYGIETQHVENASMEFDTATLRPTYRFMQGVPGRSNAFEIARRLGLNEIIVKEAENLTDTDSDVNRIIEQLEAQTVETQKRLEHIKDVEQENLKFNRAVKKLYNEFSHEYDKELEKAQKEIQEMVDTALAESDSILKNLHDKSQLKPHEVIDAKGKLKKLAAQVDLSKNKVLRKAKKEKAARAPRVGDDIIVTAYGQRGTLTSQAKNGNWEAQVGLIKMSLKADEFTLVRAQAEAQQPKKKQINVVKKAKKTSSDGPRARLDLRGKRYEEAMQELDAFIDQALLNNMSQVEIIHGIGTGVIRDAVTKYLRRHRHVKNFEYAPQSAGGSGCTIATLG.

328 to 335 (GPNTGGKT) provides a ligand contact to ATP. The Smr domain maps to 708–783 (LDLRGKRYEE…GSGCTIATLG (76 aa)).

It belongs to the DNA mismatch repair MutS family. MutS2 subfamily. Homodimer. Binds to stalled ribosomes, contacting rRNA.

Functionally, endonuclease that is involved in the suppression of homologous recombination and thus may have a key role in the control of bacterial genetic diversity. In terms of biological role, acts as a ribosome collision sensor, splitting the ribosome into its 2 subunits. Detects stalled/collided 70S ribosomes which it binds and splits by an ATP-hydrolysis driven conformational change. Acts upstream of the ribosome quality control system (RQC), a ribosome-associated complex that mediates the extraction of incompletely synthesized nascent chains from stalled ribosomes and their subsequent degradation. Probably generates substrates for RQC. The chain is Endonuclease MutS2 from Streptococcus thermophilus (strain ATCC BAA-491 / LMD-9).